Consider the following 510-residue polypeptide: Sphingolipid C9-methyltransferase B (510 aa).

N-linked (GlcNAc...) asparagine glycosylation occurs at asparagine 55. 2 helical membrane passes run 62 to 82 and 84 to 104; these read LLGG…GGGA and TFVF…WTYA. An N-linked (GlcNAc...) asparagine glycan is attached at asparagine 175. Residues 227–228, 264–272, 290–295, and 320–321 each bind S-adenosyl-L-methionine; these read YT, MLDIGCGWG, TIAENQ, and YR. Asparagine 294 carries an N-linked (GlcNAc...) asparagine glycan.

Belongs to the CFA/CMAS family.

Its subcellular location is the membrane. The catalysed reaction is a (4E,8E)-4-sphinga-4,8-dienine ceramide + S-adenosyl-L-methionine = a 9-methyl-(4E,8E)-sphinga-4,8-dienine ceramide + S-adenosyl-L-homocysteine + H(+). It functions in the pathway lipid metabolism; sphingolipid metabolism. Its function is as follows. Catalyzes methylation of the sphingoid base component of glucosylceramides (GluCers) at the C9-position. Sphingolipid C9-methylation requires 4,8-desaturated ceramides as substrates. Glucosylceramides play important roles in growth, differentiation and pathogenicity. The methyl group at the C9-position distinguishes fungal glucosylceramides from those of plants and animals and may thus play a role in host-pathogen interactions enabling the host to recognize the fungal attack and initiate specific defense responses. In Emericella nidulans (strain FGSC A4 / ATCC 38163 / CBS 112.46 / NRRL 194 / M139) (Aspergillus nidulans), this protein is Sphingolipid C9-methyltransferase B.